A 450-amino-acid chain; its full sequence is Divalent metal cation transporter MntH (450 aa).

Transmembrane regions (helical) follow at residues Leu-34–Ile-54, Ala-61–Leu-81, Ile-108–Val-128, Ile-141–Met-161, Ala-170–Ser-190, Gly-212–Leu-232, Ile-263–Phe-283, Pro-305–Ala-325, Ser-361–Ile-381, Gln-383–Leu-403, and Val-422–Val-442.

It belongs to the NRAMP family.

The protein resides in the cell membrane. H(+)-stimulated, divalent metal cation uptake system. This is Divalent metal cation transporter MntH from Staphylococcus aureus (strain JH1).